The sequence spans 216 residues: Talanin (216 aa).

Isoform 4 is expressed in placenta, lung, kidney and pancreas.

May play a role in uric acid excretion. The polypeptide is Talanin (ZNF365) (Homo sapiens (Human)).